We begin with the raw amino-acid sequence, 952 residues long: MDEEEHLHRFGTPLPALQKDVVPAKKPVAIEDQIVKDENGKRRFHGAFTGGFSAGFWNTVGSLEGWTPQTFKSSRGERASSKAQLKPEDFMDQEDLGEFGIAPQGIRTRDEFANEDEQKQRSDQRRRKLMQPELGVGAIPGLPVLEQLLRPVRDKVAVRILKSMGWKPGQGVGPRQTRKEKRQATARNSKEQYLMEHYGAEGLPSNKENKGEEDSNNEDEDDEDITFAPDDYEPIFYTPKENRFGMSYSGLNRDPILSKSSSSSAKPMQHINLFGEMEAQANKKQLSIRGQAFGVGAFEEEDEDIYARDDMTRYDFSLADKKPKQKKQQHVQQRHVIDGFSEDNSPAVLQRPYAIDLPRDFQPRNWLQRRSRFAPMDKERAQKLETASEYKRSGLGRHDLNPDQRAQILGEQQQEEKTAEEQPKRNPFKDHSKSLMERINARTEGFTKGGVITENGEEQQTELAKEVKEANAAIQERAALKTKDLPSAMNSSSAFKPFIADEAKQLRYEKFVSSKLTDDKEITEFLARMQPVTLSLWDREMEKKEFIQAAKIYRPLVGLMNDRFVSEANVQAEKVEQQEKPPEERKIVMERTKTMWKPTALLCKRYNIAEPFGGAMLEPEKELKAKAKISVFDYLETSVNTKANFETPSIFPKHIEKSIPEKVETPPSPPPAPQPEAEIQDKPNTKEEPSKHTFVPKTPLEQAVDESRNKPISEKVDLFKSIFEDSDEEETELSEQDKLAILQESFGLPVTSTTSAAAQNVLRNTSPPRGIFASLFSPKIKDAAKEPAPTKFGPIEGSKLKIAYKPRKERLRNDRELAMAEVAPEDIYGPKLPTAPPQKPAAPEIQAEANIDDRLQQLWQQHAPKKRKAEKWVEKKCISGSEDSDASSSNESSSSDSSDDNDKRSKLSKPKKSHKGSSSKKSKKSKLKSKKKSKKSEESKHKAKKKKKKSKH.

Disordered regions lie at residues 104–127 (QGIR…QRRR), 165–233 (GWKP…DDYE), 320–345 (DKKP…EDNS), 370–432 (RSRF…KDHS), 660–711 (PEKV…RNKP), and 822–952 (VAPE…KSKH). Basic and acidic residues predominate over residues 107–123 (RTRDEFANEDEQKQRSD). The G-patch domain maps to 153–199 (RDKVAVRILKSMGWKPGQGVGPRQTRKEKRQATARNSKEQYLMEHYG). Acidic residues predominate over residues 214–233 (DSNNEDEDDEDITFAPDDYE). Basic residues predominate over residues 323 to 333 (PKQKKQQHVQQ). Basic and acidic residues-rich tracts occupy residues 375–402 (PMDK…DLNP), 414–432 (QEEK…KDHS), and 679–691 (IQDK…EPSK). The span at 886–896 (ASSSNESSSSD) shows a compositional bias: low complexity. Basic residues-rich tracts occupy residues 906-934 (KLSK…KKSK) and 941-952 (HKAKKKKKKSKH).

The protein belongs to the GPATCH1 family.

The polypeptide is G patch domain-containing protein 1 homolog (Drosophila melanogaster (Fruit fly)).